The chain runs to 240 residues: 2,3,4,5-tetrahydropyridine-2,6-dicarboxylate N-acetyltransferase (240 aa).

It belongs to the transferase hexapeptide repeat family. DapH subfamily.

The catalysed reaction is (S)-2,3,4,5-tetrahydrodipicolinate + acetyl-CoA + H2O = L-2-acetamido-6-oxoheptanedioate + CoA. The protein operates within amino-acid biosynthesis; L-lysine biosynthesis via DAP pathway; LL-2,6-diaminopimelate from (S)-tetrahydrodipicolinate (acetylase route): step 1/3. In terms of biological role, catalyzes the transfer of an acetyl group from acetyl-CoA to tetrahydrodipicolinate. This is 2,3,4,5-tetrahydropyridine-2,6-dicarboxylate N-acetyltransferase from Staphylococcus epidermidis (strain ATCC 35984 / DSM 28319 / BCRC 17069 / CCUG 31568 / BM 3577 / RP62A).